The following is a 578-amino-acid chain: Longifolene synthase (578 aa).

Mg(2+) contacts are provided by Asp331, Asp335, and Asp475. The DDXXD motif motif lies at 331–335 (DDLYD).

It belongs to the terpene synthase family. Tpsd subfamily. Mg(2+) is required as a cofactor. It depends on Mn(2+) as a cofactor.

The protein localises to the cytoplasm. It catalyses the reaction (2E,6E)-farnesyl diphosphate = longifolene + diphosphate. Its pathway is sesquiterpene biosynthesis. It participates in terpene metabolism; oleoresin biosynthesis. Functionally, involved in defensive oleoresin formation in conifers in response to insect attack or other injury. Involved in sesquiterpene (C15) olefins biosynthesis. Produces mainly longifolene, but also multiple minor products including alpha-longipinene, alpha-longicyclene, E-beta-farnesene, longiborneol, cyclosativene, beta-longipinene, and 12 other sesquiterpenes when used with farnesyl diphosphate (FPP) as substrate. This Picea abies (Norway spruce) protein is Longifolene synthase (TPS-Lon).